The chain runs to 440 residues: Trigger factor (440 aa).

The PPIase FKBP-type domain maps to 163–248 (GDILTVDFLG…AKALKRRVAP (86 aa)).

This sequence belongs to the FKBP-type PPIase family. Tig subfamily.

It is found in the cytoplasm. The catalysed reaction is [protein]-peptidylproline (omega=180) = [protein]-peptidylproline (omega=0). Involved in protein export. Acts as a chaperone by maintaining the newly synthesized protein in an open conformation. Functions as a peptidyl-prolyl cis-trans isomerase. In Acidiphilium cryptum (strain JF-5), this protein is Trigger factor.